We begin with the raw amino-acid sequence, 276 residues long: Type 2 phosphatidylinositol 4,5-bisphosphate 4-phosphatase (276 aa).

Over residues 1 to 10 the composition is skewed to basic and acidic residues; that stretch reads MAADGIDERS. The disordered stretch occupies residues 1-27; it reads MAADGIDERSPLISPSSGNVTPTAPPY. The segment covering 13–27 has biased composition (polar residues); the sequence is ISPSSGNVTPTAPPY. Residue cysteine 106 is part of the active site. The CX5R motif motif lies at 106 to 112; it reads CKDISRR. A run of 2 helical transmembrane segments spans residues 211-231 and 246-266; these read CCTYITMGMICIFIGVGLTVG and WAVAYLVGLVCLIRACYWGAI.

It is found in the late endosome membrane. The protein localises to the lysosome membrane. It catalyses the reaction a 1,2-diacyl-sn-glycero-3-phospho-(1D-myo-inositol-4,5-bisphosphate) + H2O = a 1,2-diacyl-sn-glycero-3-phospho-(1D-myo-inositol-5-phosphate) + phosphate. In terms of biological role, catalyzes the hydrolysis of phosphatidylinositol-4,5-bisphosphate (PtdIns-4,5-P2) to phosphatidylinositol-4-phosphate (PtdIns-4-P). In Xenopus tropicalis (Western clawed frog), this protein is Type 2 phosphatidylinositol 4,5-bisphosphate 4-phosphatase (pip4p2).